Reading from the N-terminus, the 271-residue chain is Orotidine 5'-phosphate decarboxylase (271 aa).

Lys97 acts as the Proton donor in catalysis.

This sequence belongs to the OMP decarboxylase family. Type 2 subfamily.

It catalyses the reaction orotidine 5'-phosphate + H(+) = UMP + CO2. It participates in pyrimidine metabolism; UMP biosynthesis via de novo pathway; UMP from orotate: step 2/2. This is Orotidine 5'-phosphate decarboxylase from Leptospira borgpetersenii serovar Hardjo-bovis (strain JB197).